The chain runs to 660 residues: MEEKFVLHSPFAPSGDQPEAIKALVDGIDEKKEHQVLLGVTGSGKTFTIANVIAQLNRPSLIISHNKTLASQLYSELKALFPDNRVEYFVSYFDFYKPEAYIPKSDLYIEKTSKNNKELEAMRMSAINALSIRKDTIVVASVAAIYGESNPKHYRQNFFPIEVGMQIDRKSLLLKLSQIGYERNRMELNKGQFDVKGDSIEICPGYVSDTNIRIDMFGNEIEAITLIDPLSKNVEGSRKNMTLFPATTYTVHENTIQNTVDLIKQELSERIEYFKSHDKLLEAQRIKDRTLNDLDSLLEFGYTSGIENYSRYLDGRAPGQRPYTLFDYLPDDSVIFIDESHLMIPQLHGMHNGDRARKLSLVEYGFRLPSALDNRPLRFEEFAEFKFPKIYISATPGDYELDLTHGEIVTQYIRPTGLLDPIIEIHSRDNQIEDIYDHLKEQIAKKERTLILTTTKKNAEELSLFLQEKKIKSAYIHDRFKIFERNEILKGLRMGKFDVVVGINLLKEGIDLPEVSLICVLNADSTGLMRDTRSLIQIVGRAARNDHGKVIFYANEITSSMRECIEDNLFKRKIQSEYNEKHNIIPKTIVKPIAPPIQNGILSEDHSKYYGEKDLSQMKHNKKFIDQMVRKMTQLAKANKFEEAIEIRDYLIEIGIELDK.

The region spanning Asp-26–Lys-196 is the Helicase ATP-binding domain. Residue Gly-39–Thr-46 participates in ATP binding. The short motif at Tyr-92 to Asn-115 is the Beta-hairpin element. A Helicase C-terminal domain is found at Gln-431–Ile-593. Residues Lys-622–Glu-657 form the UVR domain.

Belongs to the UvrB family. Forms a heterotetramer with UvrA during the search for lesions. Interacts with UvrC in an incision complex.

The protein resides in the cytoplasm. Functionally, the UvrABC repair system catalyzes the recognition and processing of DNA lesions. A damage recognition complex composed of 2 UvrA and 2 UvrB subunits scans DNA for abnormalities. Upon binding of the UvrA(2)B(2) complex to a putative damaged site, the DNA wraps around one UvrB monomer. DNA wrap is dependent on ATP binding by UvrB and probably causes local melting of the DNA helix, facilitating insertion of UvrB beta-hairpin between the DNA strands. Then UvrB probes one DNA strand for the presence of a lesion. If a lesion is found the UvrA subunits dissociate and the UvrB-DNA preincision complex is formed. This complex is subsequently bound by UvrC and the second UvrB is released. If no lesion is found, the DNA wraps around the other UvrB subunit that will check the other stand for damage. This Metamycoplasma arthritidis (strain 158L3-1) (Mycoplasma arthritidis) protein is UvrABC system protein B.